We begin with the raw amino-acid sequence, 421 residues long: Subtilisin-like protease 2 (421 aa).

The first 16 residues, 1-16 (MQLLNFGLLLLPFVAG), serve as a signal peptide directing secretion. Residues 17–122 (DLAPQPEPLL…VHPDQHVYLA (106 aa)) constitute a propeptide that is removed on maturation. Residues 36–122 (QYIVTLKEGL…VHPDQHVYLA (87 aa)) form the Inhibitor I9 domain. The 291-residue stretch at 131 to 421 (RWGLGYMSSK…ERKFTLPKYF (291 aa)) folds into the Peptidase S8 domain. Catalysis depends on charge relay system residues Asp-169 and His-201. N-linked (GlcNAc...) asparagine glycosylation is found at Asn-248, Asn-261, and Asn-348. Ser-357 functions as the Charge relay system in the catalytic mechanism. An N-linked (GlcNAc...) asparagine glycan is attached at Asn-388.

Belongs to the peptidase S8 family.

The protein resides in the secreted. Its function is as follows. Secreted subtilisin-like serine protease with keratinolytic activity that contributes to pathogenicity. This is Subtilisin-like protease 2 (SUB2) from Trichophyton equinum (Horse ringworm fungus).